The following is a 141-amino-acid chain: Hemoglobin subunit alpha (141 aa).

The region spanning 1–141 (VLSPTDKTNV…VSTVLTSKYR (141 aa)) is the Globin domain. Phosphoserine is present on S3. K7 is modified (N6-succinyllysine). At T8 the chain carries Phosphothreonine. Residue K11 is modified to N6-succinyllysine. Y24 carries the phosphotyrosine modification. The residue at position 35 (S35) is a Phosphoserine. K40 carries the post-translational modification N6-succinyllysine. S49 is modified (phosphoserine). H58 lines the O2 pocket. H87 serves as a coordination point for heme b. Position 102 is a phosphoserine (S102). T108 carries the phosphothreonine modification. The residue at position 124 (S124) is a Phosphoserine. T134 and T137 each carry phosphothreonine. S138 carries the phosphoserine modification.

This sequence belongs to the globin family. Heterotetramer of two alpha chains and two beta chains. As to expression, red blood cells.

Functionally, involved in oxygen transport from the lung to the various peripheral tissues. Its function is as follows. Hemopressin acts as an antagonist peptide of the cannabinoid receptor CNR1. Hemopressin-binding efficiently blocks cannabinoid receptor CNR1 and subsequent signaling. This chain is Hemoglobin subunit alpha (HBA), found in Rhinoceros unicornis (Greater Indian rhinoceros).